Here is a 199-residue protein sequence, read N- to C-terminus: Shikimate kinase (199 aa).

34-39 (GAGKTA) lines the ATP pocket. Position 38 (Thr38) interacts with Mg(2+). Residues Asp56, Arg80, and Gly102 each contribute to the substrate site. Arg140 contributes to the ATP binding site. Arg159 contributes to the substrate binding site.

It belongs to the shikimate kinase family. In terms of assembly, monomer. The cofactor is Mg(2+).

It is found in the cytoplasm. The enzyme catalyses shikimate + ATP = 3-phosphoshikimate + ADP + H(+). Its pathway is metabolic intermediate biosynthesis; chorismate biosynthesis; chorismate from D-erythrose 4-phosphate and phosphoenolpyruvate: step 5/7. In terms of biological role, catalyzes the specific phosphorylation of the 3-hydroxyl group of shikimic acid using ATP as a cosubstrate. This chain is Shikimate kinase, found in Cereibacter sphaeroides (strain ATCC 17023 / DSM 158 / JCM 6121 / CCUG 31486 / LMG 2827 / NBRC 12203 / NCIMB 8253 / ATH 2.4.1.) (Rhodobacter sphaeroides).